The primary structure comprises 459 residues: WD repeat-containing protein 41 (459 aa).

WD repeat units follow at residues Lys-40–Glu-79, Gly-82–Arg-128, Cys-131–Thr-168, Asp-220–Tyr-258, Ala-321–Ala-359, and Gly-403–Arg-441.

Component of the C9orf72-SMCR8 complex, at least composed of C9orf72, SMCR8 and WDR41. The complex is formed of two protomers, each individually consisting of one molecule each of C9orf72, SMCR8 and WDR41. The protomers homodimerize via an interaction between C9orf72 (via C-terminus) and SMCR8 (via N-terminus). Within each protomer SMCR8 (via DENN domain) acts as a bridging protein between WDR41 (via C-terminus and N-terminus) and C9orf72 (via C-terminus). The C9orf72-SMCR8 complex associates with the ULK1/ATG1 kinase complex.

It localises to the cytoplasm. Functionally, non-catalytic component of the C9orf72-SMCR8 complex, a complex that has guanine nucleotide exchange factor (GEF) activity and regulates autophagy. The C9orf72-SMCR8 complex promotes the exchange of GDP to GTP, converting inactive GDP-bound RAB8A and RAB39B into their active GTP-bound form, thereby promoting autophagosome maturation. As part of the C9orf72-SMCR8 complex, stimulates RAB8A and RAB11A GTPase activity in vitro, however WDR42 is shown not be an essential complex component for this function. The C9orf72-SMCR8 complex also acts as a negative regulator of autophagy initiation by interacting with the ULK1/ATG1 kinase complex and inhibiting its protein kinase activity. This chain is WD repeat-containing protein 41, found in Homo sapiens (Human).